The chain runs to 496 residues: MKLHHRMLRHFIAASVIVLTSSFLIFELVASDRAMSAYLRYIVQKADSSFLYDKYQNQSIAAHVMRALAAEQSEVSPEQRRAICEAFESANNTHGLNLTAHKYPGLRGTLQTASTDCDTIVEAAALLPAFDQAVEGNRHQDDYGSGLGMAEEKFHYYLDLNDRYVYFYEPVNVEYFAMNNWSFLQSGSIGIDRKDIEKVFTGRTVLSSIYQDQRTKQNVMSLLTPVYVAGQLKGIVLLDINKNNLRNIFYTHDRPLLWRFLNVTLTDTDSGRDIIINQSEDNLFQYVSYVHDLPGGIRVSLSIDILYFITSSWKSVLFWILTALILLNMVRMHFRLYQNVSRENISDAMTGLYNRKILTPELEQRLQKLVQSGSSVMFIAIDMDKLKQINDTLGHQEGDLAITLLAQAIKQSIRKSDYAIRLGGDEFCIILVDSTPQIAAQLPERIEKRLQHIAPQKEIGFSSGIYAMKENDTLHDAYKASDERLYVNKQNKNSRS.

2 helical membrane-spanning segments follow: residues 11-31 and 305-325; these read FIAA…LVAS and ILYF…TALI. Residues 374-496 enclose the GGDEF domain; it reads SSVMFIAIDM…VNKQNKNSRS (123 aa). A Mg(2+)-binding site is contributed by Asp382. Substrate-binding residues include Asn390, His395, and Asp399. Residue Asp425 coordinates Mg(2+). Asp425 functions as the Proton acceptor in the catalytic mechanism.

Homodimer. It depends on Mg(2+) as a cofactor.

It localises to the cell inner membrane. It catalyses the reaction 2 GTP = 3',3'-c-di-GMP + 2 diphosphate. The protein operates within purine metabolism; 3',5'-cyclic di-GMP biosynthesis. Its function is as follows. Catalyzes the synthesis of cyclic-di-GMP (c-di-GMP) via the condensation of 2 GTP molecules. The protein is Probable diguanylate cyclase DgcJ of Escherichia coli (strain K12).